Reading from the N-terminus, the 362-residue chain is S-adenosylmethionine:tRNA ribosyltransferase-isomerase (362 aa).

This sequence belongs to the QueA family. In terms of assembly, monomer.

It is found in the cytoplasm. The catalysed reaction is 7-aminomethyl-7-carbaguanosine(34) in tRNA + S-adenosyl-L-methionine = epoxyqueuosine(34) in tRNA + adenine + L-methionine + 2 H(+). It participates in tRNA modification; tRNA-queuosine biosynthesis. Its function is as follows. Transfers and isomerizes the ribose moiety from AdoMet to the 7-aminomethyl group of 7-deazaguanine (preQ1-tRNA) to give epoxyqueuosine (oQ-tRNA). In Methylobacterium sp. (strain 4-46), this protein is S-adenosylmethionine:tRNA ribosyltransferase-isomerase.